Consider the following 439-residue polypeptide: Phosphomethylpyrimidine synthase (439 aa).

Residues Asn67, Met96, Tyr126, His165, 187-189, 228-231, and Glu267 each bind substrate; these read SRG and DSLR. His271 serves as a coordination point for Zn(2+). Tyr294 is a substrate binding site. His335 provides a ligand contact to Zn(2+). Cys411, Cys414, and Cys418 together coordinate [4Fe-4S] cluster.

It belongs to the ThiC family. [4Fe-4S] cluster serves as cofactor.

The enzyme catalyses 5-amino-1-(5-phospho-beta-D-ribosyl)imidazole + S-adenosyl-L-methionine = 4-amino-2-methyl-5-(phosphooxymethyl)pyrimidine + CO + 5'-deoxyadenosine + formate + L-methionine + 3 H(+). Its pathway is cofactor biosynthesis; thiamine diphosphate biosynthesis. Its function is as follows. Catalyzes the synthesis of the hydroxymethylpyrimidine phosphate (HMP-P) moiety of thiamine from aminoimidazole ribotide (AIR) in a radical S-adenosyl-L-methionine (SAM)-dependent reaction. The polypeptide is Phosphomethylpyrimidine synthase (Ignicoccus hospitalis (strain KIN4/I / DSM 18386 / JCM 14125)).